The primary structure comprises 174 residues: Recombination protein RecR (174 aa).

Residues 30-45 form a C4-type zinc finger; it reads CNACRTFTEEEECTIC. One can recognise a Toprim domain in the interval 54 to 149; sequence GQLCIVEMPE…KVTRIAHGIP (96 aa).

This sequence belongs to the RecR family.

May play a role in DNA repair. It seems to be involved in an RecBC-independent recombinational process of DNA repair. It may act with RecF and RecO. This Haemophilus ducreyi (strain 35000HP / ATCC 700724) protein is Recombination protein RecR.